Here is a 215-residue protein sequence, read N- to C-terminus: Cytochrome c biogenesis ATP-binding export protein CcmA (215 aa).

The ABC transporter domain occupies 3-215 (LEAENLAGER…MAAFSVEDIA (213 aa)). 35 to 42 (GPNGSGKS) contacts ATP.

This sequence belongs to the ABC transporter superfamily. CcmA exporter (TC 3.A.1.107) family. The complex is composed of two ATP-binding proteins (CcmA) and two transmembrane proteins (CcmB).

The protein resides in the cell inner membrane. It carries out the reaction heme b(in) + ATP + H2O = heme b(out) + ADP + phosphate + H(+). Part of the ABC transporter complex CcmAB involved in the biogenesis of c-type cytochromes; once thought to export heme, this seems not to be the case, but its exact role is uncertain. Responsible for energy coupling to the transport system. This Brucella melitensis biotype 1 (strain ATCC 23456 / CCUG 17765 / NCTC 10094 / 16M) protein is Cytochrome c biogenesis ATP-binding export protein CcmA.